The sequence spans 507 residues: MAKRKVPPEFVVERDDYKCIRCLACVRVCSYGANFYDENANRVYTENTKCVGCHFCEAICPTEAITVRKNDFDIRPLAHWTPEHLIGIMKQAETGGVLLTSMGNDRPYFSYFDRIVLNASQVTNPSIDPLREPMEIRTYIGRKEEKLEIEEDEDGTVKLKTEIAPQLKLEVPVMFTAMSYGSISLNAILSLARAARTVGTFFNTGEGGLPKELREFKDNMIVQVASGRFGVSADYLNAGSAVEIKIGQGAKPGIGGHLPGEKVTEPISETRMIPVGTDALSPAPHHDIYSIEDLRQLIYAIKEATRYEKPVGVKIAAVHNVAPIAAGAVRAGADYIVIDGIRGGTGAAPKITRDHVGIPIEFAVAVVDQRLREEGIRHMASIVVAGGIRNSADVIKAIALGADAVYIGTAALISLGCHLCQTCYLGKCNWGIATQDPKLTKRLNPEIGARRAANLLRAWAHEIKEILGGMGINAIESLRGNREVLRGVGLHEYELKLLGIKPAGEAW.

4Fe-4S ferredoxin-type domains are found at residues 10 to 39 and 41 to 70; these read FVVE…YDEN and NRVY…VRKN. Residues Cys-19, Cys-22, Cys-25, Cys-29, Cys-50, Cys-53, Cys-56, and Cys-60 each coordinate [4Fe-4S] cluster.

The protein belongs to the glutamate synthase family. FMN serves as cofactor.

It carries out the reaction 2 L-glutamate + NADP(+) = L-glutamine + 2-oxoglutarate + NADPH + H(+). This is Archaeal-type glutamate synthase [NADPH] from Thermotoga maritima (strain ATCC 43589 / DSM 3109 / JCM 10099 / NBRC 100826 / MSB8).